The sequence spans 406 residues: UPF0754 membrane protein CYB_2931 (406 aa).

A run of 2 helical transmembrane segments spans residues 1-21 and 385-405; these read MAFW…YFTN and IVNL…LFLL.

Belongs to the UPF0754 family.

The protein localises to the cell inner membrane. The polypeptide is UPF0754 membrane protein CYB_2931 (Synechococcus sp. (strain JA-2-3B'a(2-13)) (Cyanobacteria bacterium Yellowstone B-Prime)).